The sequence spans 71 residues: MPKYWSYPVGLAVEINNNARYGCPHHVGRKGKIIEHLHSATYDYAVSDETGDITYFKEHELTPLKGGLAYV.

The chain is SPbeta prophage-derived uncharacterized protein YorP (yorP) from Bacillus subtilis (strain 168).